A 447-amino-acid chain; its full sequence is T-box transcription factor TBX20 (447 aa).

Residues 62-81 form a disordered region; it reads DAHGEFGGGSGSSPSSSSLC. A DNA-binding region (T-box) is located at residues 109–288; the sequence is LWDKFHELGT…SNPFAKGFRD (180 aa). Residues 316-340 form a disordered region; sequence TYGGEEDVLGDESQTTPNRGSAFTT. Polar residues predominate over residues 327-340; the sequence is ESQTTPNRGSAFTT.

It localises to the nucleus. In terms of biological role, acts as a transcriptional activator and repressor required for cardiac development and may have key roles in the maintenance of functional and structural phenotypes in adult heart. This is T-box transcription factor TBX20 (TBX20) from Homo sapiens (Human).